We begin with the raw amino-acid sequence, 360 residues long: Peptide chain release factor 1 (360 aa).

Glutamine 237 carries the post-translational modification N5-methylglutamine.

It belongs to the prokaryotic/mitochondrial release factor family. Methylated by PrmC. Methylation increases the termination efficiency of RF1.

It is found in the cytoplasm. Its function is as follows. Peptide chain release factor 1 directs the termination of translation in response to the peptide chain termination codons UAG and UAA. The polypeptide is Peptide chain release factor 1 (Pseudomonas savastanoi pv. phaseolicola (strain 1448A / Race 6) (Pseudomonas syringae pv. phaseolicola (strain 1448A / Race 6))).